The chain runs to 75 residues: UPF0352 protein ASA_2693 (75 aa).

The protein belongs to the UPF0352 family.

This is UPF0352 protein ASA_2693 from Aeromonas salmonicida (strain A449).